We begin with the raw amino-acid sequence, 23 residues long: Acidic phospholipase A2 CHA-E6b (23 aa).

It belongs to the phospholipase A2 family. Group II subfamily. D49 sub-subfamily. Ca(2+) is required as a cofactor. In terms of processing, contains 7 disulfide bonds. As to expression, expressed by the venom gland.

It is found in the secreted. The enzyme catalyses a 1,2-diacyl-sn-glycero-3-phosphocholine + H2O = a 1-acyl-sn-glycero-3-phosphocholine + a fatty acid + H(+). Its function is as follows. Snake venom phospholipase A2 (PLA2) that shows high lipolytic (1200 umol/mg/min) and weak ADP-induced platelet aggregation activities. Also shows weak anticoagulant activity (IC(50) of about 1.0 uM). PLA2 catalyzes the calcium-dependent hydrolysis of the 2-acyl groups in 3-sn-phosphoglycerides. In Crotalus horridus (Timber rattlesnake), this protein is Acidic phospholipase A2 CHA-E6b.